A 214-amino-acid chain; its full sequence is 3,4-dihydroxy-2-butanone 4-phosphate synthase (214 aa).

Residues 37-38 (RE), D42, 150-154 (RRGHT), and E174 each bind D-ribulose 5-phosphate. Mg(2+) is bound at residue E38. Residue H153 participates in Mg(2+) binding.

Belongs to the DHBP synthase family. Homodimer. Requires Mg(2+) as cofactor. Mn(2+) serves as cofactor.

It catalyses the reaction D-ribulose 5-phosphate = (2S)-2-hydroxy-3-oxobutyl phosphate + formate + H(+). Its pathway is cofactor biosynthesis; riboflavin biosynthesis; 2-hydroxy-3-oxobutyl phosphate from D-ribulose 5-phosphate: step 1/1. Functionally, catalyzes the conversion of D-ribulose 5-phosphate to formate and 3,4-dihydroxy-2-butanone 4-phosphate. This Pasteurella multocida (strain Pm70) protein is 3,4-dihydroxy-2-butanone 4-phosphate synthase.